Here is a 209-residue protein sequence, read N- to C-terminus: Protein TIC 20-v, chloroplastic (209 aa).

Residues 1–49 (MAIISQFFAPLPSLTGTLTLTGRSFLPLNLDTQFPKPRLSRDRAATLVL) constitute a chloroplast transit peptide. The next 4 helical transmembrane spans lie at 63 to 83 (IISA…GKFI), 103 to 123 (AFKS…FVVV), 132 to 152 (VRFN…PDLL), and 173 to 193 (TVFL…LFGL).

This sequence belongs to the Tic20 family. In terms of assembly, part of the Tic complex. Expressed in leaves, siliques and roots.

Its subcellular location is the plastid. The protein localises to the chloroplast inner membrane. Its function is as follows. May be involved in protein precursor import into chloroplasts. Not redundant with TIC20-I, TIC20-II or TIC20-IV. This Arabidopsis thaliana (Mouse-ear cress) protein is Protein TIC 20-v, chloroplastic (TIC20-V).